A 339-amino-acid chain; its full sequence is Anthranilate phosphoribosyltransferase (339 aa).

5-phospho-alpha-D-ribose 1-diphosphate-binding positions include Gly79, 82–83, Ser87, 89–92, 107–115, and Ser119; these read GD, NIST, and KHGNRSISS. Gly79 is a binding site for anthranilate. Ser91 lines the Mg(2+) pocket. Asn110 lines the anthranilate pocket. Arg165 provides a ligand contact to anthranilate. Residues Asp224 and Glu225 each contribute to the Mg(2+) site.

This sequence belongs to the anthranilate phosphoribosyltransferase family. In terms of assembly, homodimer. It depends on Mg(2+) as a cofactor.

The enzyme catalyses N-(5-phospho-beta-D-ribosyl)anthranilate + diphosphate = 5-phospho-alpha-D-ribose 1-diphosphate + anthranilate. It participates in amino-acid biosynthesis; L-tryptophan biosynthesis; L-tryptophan from chorismate: step 2/5. Functionally, catalyzes the transfer of the phosphoribosyl group of 5-phosphorylribose-1-pyrophosphate (PRPP) to anthranilate to yield N-(5'-phosphoribosyl)-anthranilate (PRA). This Listeria monocytogenes serovar 1/2a (strain ATCC BAA-679 / EGD-e) protein is Anthranilate phosphoribosyltransferase.